A 381-amino-acid chain; its full sequence is Regulatory protein RapF (381 aa).

Mn(2+)-binding residues include Leu40, Met43, and Glu45. 6 TPR repeats span residues 101-137 (YYFNFFRGMYELDQREYLSAIKFFKKAESKLIFVKDR), 148-181 (SESYYYMKQTYFSMDYARQAYEIYKEHEAYNIRL), 182-215 (LQCHSLFATNFLDLKQYEDAISHFQKAYSMAEAE), 222-255 (GRTLYNIGLCKNSQSQYEDAIPYFKRAIAVFEES), 262-295 (PQAYFLITQIHYKLGKIDKAHEYHSKGMAYSQKA), and 337-370 (EDFAIDVAKYYHERKNFQKASAYFLKVEQVRQLI).

The protein belongs to the Rap family. Monomer. Is monomeric either alone or in complex with PhrF. Interacts specifically with the C-terminal DNA-binding domain of ComA. Interacts with PhrF.

It is found in the cytoplasm. Its activity is regulated as follows. Inhibited by PhrF, which prevents RapF-ComA interaction. Interaction with PhrF induces a conformational change in RapF, which is propagated to the ComA binding site and causes the dissociation of ComA from RapF. Involved in the regulation of genetic competence development. Inhibits the activity of ComA, a transcriptional factor that regulates the development of genetic competence. Acts by binding to ComA, leading to the inhibition of its DNA-binding activity. May also affect transcription independently of ComA. The chain is Regulatory protein RapF (rapF) from Bacillus subtilis (strain 168).